Reading from the N-terminus, the 251-residue chain is Cell division protein ZapD (251 aa).

The protein belongs to the ZapD family. Interacts with FtsZ.

The protein localises to the cytoplasm. Its function is as follows. Cell division factor that enhances FtsZ-ring assembly. Directly interacts with FtsZ and promotes bundling of FtsZ protofilaments, with a reduction in FtsZ GTPase activity. This chain is Cell division protein ZapD, found in Azoarcus sp. (strain BH72).